We begin with the raw amino-acid sequence, 420 residues long: Zinc finger and BTB domain-containing protein 42 (420 aa).

The BTB domain occupies 24-92 (CDCTVLVGDA…MYEGRLDLHS (69 aa)). Disordered regions lie at residues 174-204 (PPSW…HPPC) and 216-248 (QGAQ…PPVC). The segment covering 227-241 (DSFSEQDSSSPQSAD) has biased composition (low complexity). C2H2-type zinc fingers lie at residues 292–314 (CICP…LSAH), 332–354 (PTCP…ERTH), 360–382 (YTCV…AVVH), and 388–411 (HACR…RKFH).

Belongs to the krueppel C2H2-type zinc-finger protein family. ZBTB18 subfamily.

The protein resides in the cytoplasm. The protein localises to the nucleus. It is found in the nucleoplasm. In terms of biological role, transcriptional repressor. Specifically binds DNA and probably acts by recruiting chromatin remodeling multiprotein complexes. The chain is Zinc finger and BTB domain-containing protein 42 (Zbtb42) from Rattus norvegicus (Rat).